A 223-amino-acid polypeptide reads, in one-letter code: tRNA (guanine-N(7)-)-methyltransferase (223 aa).

Positions 56, 81, 108, and 130 each coordinate S-adenosyl-L-methionine. The active site involves aspartate 130. Residues lysine 134 and aspartate 166 each coordinate substrate.

Belongs to the class I-like SAM-binding methyltransferase superfamily. TrmB family.

The enzyme catalyses guanosine(46) in tRNA + S-adenosyl-L-methionine = N(7)-methylguanosine(46) in tRNA + S-adenosyl-L-homocysteine. It participates in tRNA modification; N(7)-methylguanine-tRNA biosynthesis. Its function is as follows. Catalyzes the formation of N(7)-methylguanine at position 46 (m7G46) in tRNA. The polypeptide is tRNA (guanine-N(7)-)-methyltransferase (Rubrobacter xylanophilus (strain DSM 9941 / JCM 11954 / NBRC 16129 / PRD-1)).